Here is a 475-residue protein sequence, read N- to C-terminus: WASH complex subunit 1 (475 aa).

Residues 1–54 (MTAVKTQHSLAGQVYAVPLIQPDLRREEAIQQVADALQYLQNISGDIFSRISQR) form a required for WASH complex assembly region. The WHD1 stretch occupies residues 1 to 167 (MTAVKTQHSL…EGLGGLPSNI (167 aa)). Lysine 219 participates in a covalent cross-link: Glycyl lysine isopeptide (Lys-Gly) (interchain with G-Cter in ubiquitin). A disordered region spans residues 296–475 (EDGALLAPPP…GDEDEDDWES (180 aa)). The segment covering 302 to 318 (APPPPPPPPPPPPPPAP) has biased composition (pro residues). The VCA stretch occupies residues 357 to 475 (QGAPKEVVDP…GDEDEDDWES (119 aa)). The region spanning 369–391 (GRATLLESIRQAGGIGKAKLRSV) is the WH2 domain. Over residues 390-406 (SVKERKLEKKKQKEQEQ) the composition is skewed to basic and acidic residues. Over residues 432–446 (SGKGPGTGTSEGPGG) the composition is skewed to gly residues. The segment covering 466–475 (GDEDEDDWES) has biased composition (acidic residues).

This sequence belongs to the WASH1 family. Component of the WASH core complex also described as WASH regulatory complex SHRC composed of WASHC1, WASHC2, WASHC3, WASHC4 and WASHC5. The WASH core complex associates with the F-actin-capping protein dimer (formed by CAPZA1, CAPZA2 or CAPZA3 and CAPZB) in a transient or substoichiometric manner which was initially described as WASH complex. Interacts (via WHD1 region) with WASHC2; the interaction is direct. Interacts with BECN1; WASHC1 and AMBRA1 can competitively interact with BECN1. Interacts with BLOC1S2; may associate with the BLOC-1 complex. Interacts with tubulin gamma chain (TUBG1 or TUBG2). Interacts with TBC1D23. In terms of processing, ubiquitinated at Lys-219 via 'Lys-63'-linked ubiquitin chains by the TRIM27:MAGEL2 E3 ubiquitin ligase complex, leading to promote endosomal F-actin assembly.

The protein resides in the early endosome membrane. Its subcellular location is the recycling endosome membrane. Its function is as follows. Acts as a component of the WASH core complex that functions as a nucleation-promoting factor (NPF) at the surface of endosomes, where it recruits and activates the Arp2/3 complex to induce actin polymerization, playing a key role in the fission of tubules that serve as transport intermediates during endosome sorting. Regulates the trafficking of endosomal alpha5beta1 integrin to the plasma membrane and involved in invasive cell migration. In T-cells involved in endosome-to-membrane recycling of receptors including T-cell receptor (TCR), CD28 and ITGAL; proposed to be implicated in T-cell proliferation and effector function. In dendritic cells involved in endosome-to-membrane recycling of major histocompatibility complex (MHC) class II probably involving retromer and subsequently allowing antigen sampling, loading and presentation during T-cell activation. Involved in cytokinesis and following polar body extrusion during oocyte meiotic maturation. Involved in Arp2/3 complex-dependent actin assembly driving Salmonella typhimurium invasion independent of ruffling. Involved in the exocytosis of MMP14 leading to matrix remodeling during invasive migration and implicating late endosome-to-plasma membrane tubular connections and cooperation with the exocyst complex. Involved in negative regulation of autophagy independently from its role in endosomal sorting by inhibiting BECN1 ubiquitination to inactivate PIK3C3/Vps34 activity. The sequence is that of WASH complex subunit 1 from Rattus norvegicus (Rat).